Here is a 238-residue protein sequence, read N- to C-terminus: Peptidyl-tRNA hydrolase (238 aa).

TRNA is bound at residue tyrosine 14. Histidine 19 functions as the Proton acceptor in the catalytic mechanism. TRNA contacts are provided by phenylalanine 64, asparagine 66, and asparagine 112. Residues 190 to 202 (KTEEPAPKPEKKT) are compositionally biased toward basic and acidic residues. Residues 190-225 (KTEEPAPKPEKKTVAKSHIHQARNHNQPRMPESGPM) are disordered. Positions 203–212 (VAKSHIHQAR) are enriched in basic residues.

This sequence belongs to the PTH family. As to quaternary structure, monomer.

The protein localises to the cytoplasm. The catalysed reaction is an N-acyl-L-alpha-aminoacyl-tRNA + H2O = an N-acyl-L-amino acid + a tRNA + H(+). In terms of biological role, hydrolyzes ribosome-free peptidyl-tRNAs (with 1 or more amino acids incorporated), which drop off the ribosome during protein synthesis, or as a result of ribosome stalling. Catalyzes the release of premature peptidyl moieties from peptidyl-tRNA molecules trapped in stalled 50S ribosomal subunits, and thus maintains levels of free tRNAs and 50S ribosomes. The sequence is that of Peptidyl-tRNA hydrolase from Rhizobium rhizogenes (strain K84 / ATCC BAA-868) (Agrobacterium radiobacter).